Here is a 363-residue protein sequence, read N- to C-terminus: Probable dual-specificity RNA methyltransferase RlmN (363 aa).

Glu-106 serves as the catalytic Proton acceptor. The region spanning 112–345 is the Radical SAM core domain; it reads HEYGNSVCVT…VTIRREQGHD (234 aa). Residues Cys-119 and Cys-350 are joined by a disulfide bond. Positions 126, 130, and 133 each coordinate [4Fe-4S] cluster. S-adenosyl-L-methionine contacts are provided by residues 176–177, Ser-208, 231–233, and Asn-307; these read GE and SLH. Cys-350 (S-methylcysteine intermediate) is an active-site residue.

It belongs to the radical SAM superfamily. RlmN family. [4Fe-4S] cluster serves as cofactor.

The protein resides in the cytoplasm. It catalyses the reaction adenosine(2503) in 23S rRNA + 2 reduced [2Fe-2S]-[ferredoxin] + 2 S-adenosyl-L-methionine = 2-methyladenosine(2503) in 23S rRNA + 5'-deoxyadenosine + L-methionine + 2 oxidized [2Fe-2S]-[ferredoxin] + S-adenosyl-L-homocysteine. It carries out the reaction adenosine(37) in tRNA + 2 reduced [2Fe-2S]-[ferredoxin] + 2 S-adenosyl-L-methionine = 2-methyladenosine(37) in tRNA + 5'-deoxyadenosine + L-methionine + 2 oxidized [2Fe-2S]-[ferredoxin] + S-adenosyl-L-homocysteine. Specifically methylates position 2 of adenine 2503 in 23S rRNA and position 2 of adenine 37 in tRNAs. The sequence is that of Probable dual-specificity RNA methyltransferase RlmN from Bacillus velezensis (strain DSM 23117 / BGSC 10A6 / LMG 26770 / FZB42) (Bacillus amyloliquefaciens subsp. plantarum).